Consider the following 331-residue polypeptide: Adenosine deaminase (331 aa).

The Zn(2+) site is built by H12 and H14. Substrate is bound by residues H14 and D16. H197 serves as a coordination point for Zn(2+). Catalysis depends on E200, which acts as the Proton donor. Residue D278 coordinates Zn(2+).

It belongs to the metallo-dependent hydrolases superfamily. Adenosine and AMP deaminases family. Adenosine deaminase subfamily. Requires Zn(2+) as cofactor.

The enzyme catalyses adenosine + H2O + H(+) = inosine + NH4(+). The catalysed reaction is 2'-deoxyadenosine + H2O + H(+) = 2'-deoxyinosine + NH4(+). Catalyzes the hydrolytic deamination of adenosine and 2-deoxyadenosine. The polypeptide is Adenosine deaminase (Shewanella pealeana (strain ATCC 700345 / ANG-SQ1)).